We begin with the raw amino-acid sequence, 351 residues long: Cardiolipin synthase (CMP-forming) (351 aa).

The tract at residues 74–120 (PAPQLSASHQHQAQQQQQQTKQPQQPYDPQQDQVPSTSTASSSKPAA) is disordered. The span at 76–120 (PQLSASHQHQAQQQQQQTKQPQQPYDPQQDQVPSTSTASSSKPAA) shows a compositional bias: low complexity. Transmembrane regions (helical) follow at residues 139–159 (PLIG…ALAV), 191–211 (VLIG…GWVA), 251–271 (AAAA…GGGG), 280–300 (PLLI…GYLL), and 321–341 (LIMG…LAYG).

It belongs to the CDP-alcohol phosphatidyltransferase class-I family. Requires Mn(2+) as cofactor.

The protein resides in the mitochondrion inner membrane. It catalyses the reaction a CDP-1,2-diacyl-sn-glycerol + a 1,2-diacyl-sn-glycero-3-phospho-(1'-sn-glycerol) = a cardiolipin + CMP + H(+). In terms of biological role, catalyzes the synthesis of cardiolipin (CL) (diphosphatidylglycerol) by specifically transferring a phosphatidyl group from CDP-diacylglycerol to phosphatidylglycerol (PG). CL is a key phospholipid in mitochondrial membranes and plays important roles in maintaining the functional integrity and dynamics of mitochondria under both optimal and stress conditions. Cannot catalyze the phosphatidyl group transfer from one PG molecule to another to form CL. The chain is Cardiolipin synthase (CMP-forming) from Chlamydomonas reinhardtii (Chlamydomonas smithii).